The primary structure comprises 429 residues: UDP-N-acetylglucosamine 1-carboxyvinyltransferase (429 aa).

A phosphoenolpyruvate-binding site is contributed by Lys22 to Asn23. UDP-N-acetyl-alpha-D-glucosamine is bound at residue Arg102. Cys126 acts as the Proton donor in catalysis. Position 126 is a 2-(S-cysteinyl)pyruvic acid O-phosphothioketal (Cys126). Residues Arg131–Leu135, Asp316, and Ile338 each bind UDP-N-acetyl-alpha-D-glucosamine.

The protein belongs to the EPSP synthase family. MurA subfamily.

The protein resides in the cytoplasm. The catalysed reaction is phosphoenolpyruvate + UDP-N-acetyl-alpha-D-glucosamine = UDP-N-acetyl-3-O-(1-carboxyvinyl)-alpha-D-glucosamine + phosphate. The protein operates within cell wall biogenesis; peptidoglycan biosynthesis. Functionally, cell wall formation. Adds enolpyruvyl to UDP-N-acetylglucosamine. In Rhodopseudomonas palustris (strain BisB5), this protein is UDP-N-acetylglucosamine 1-carboxyvinyltransferase.